The following is a 1377-amino-acid chain: Endoribonuclease Dicer homolog 2b (1377 aa).

Residues methionine 1–glycine 15 are compositionally biased toward gly residues. The interval methionine 1–proline 30 is disordered. A Helicase ATP-binding domain is found at alanine 41–isoleucine 222. Leucine 54–threonine 61 provides a ligand contact to ATP. The short motif at aspartate 163–histidine 166 is the DECH box element. One can recognise a Helicase C-terminal domain in the interval threonine 388–proline 561. The Dicer dsRNA-binding fold domain maps to serine 534–glutamate 626. The 116-residue stretch at arginine 798–methionine 913 folds into the PAZ domain. RNase III domains are found at residues serine 940–glycine 1095 and valine 1132–lysine 1276. Residues glutamate 1171, aspartate 1262, and glutamate 1265 each contribute to the Mg(2+) site. In terms of domain architecture, DRBM spans aspartate 1302–alanine 1367.

It belongs to the helicase family. Dicer subfamily. In terms of assembly, may interact with ARGONAUTE1 or PINHEAD through their common PAZ domains. Requires Mg(2+) as cofactor. Mn(2+) is required as a cofactor.

The protein localises to the nucleus. Functionally, probably involved in the RNA silencing pathway. May cleave double-stranded RNA to produce short 21-24 nucleotides (nt) RNAs which target the selective destruction of complementary RNAs. In Oryza sativa subsp. japonica (Rice), this protein is Endoribonuclease Dicer homolog 2b (DCL2B).